A 318-amino-acid polypeptide reads, in one-letter code: Glycine--tRNA ligase alpha subunit (318 aa).

It belongs to the class-II aminoacyl-tRNA synthetase family. Tetramer of two alpha and two beta subunits.

It localises to the cytoplasm. It catalyses the reaction tRNA(Gly) + glycine + ATP = glycyl-tRNA(Gly) + AMP + diphosphate. This is Glycine--tRNA ligase alpha subunit (glyQ) from Moraxella catarrhalis (Branhamella catarrhalis).